Reading from the N-terminus, the 288-residue chain is Fibroblast growth factor 2 (288 aa).

A propeptide spanning residues 1–142 is cleaved from the precursor; it reads MVGVGGGDVE…TMAAGSITTL (142 aa). A disordered region spans residues 1 to 156; the sequence is MVGVGGGDVE…EDGGSGAFPP (156 aa). Over residues 72–84 the composition is skewed to basic and acidic residues; sequence ERPSGSRLGDHGR. An omega-N-methylarginine; alternate mark is found at Arg108, Arg110, and Arg112. 3 positions are modified to symmetric dimethylarginine; alternate: Arg108, Arg110, and Arg112. Over residues 113-132 the composition is skewed to low complexity; it reads GTAAPRAAPAARGSRPGPAG. Asn169 contributes to the heparin binding site. A Cell attachment site; atypical motif is present at residues 179–181; it reads DGR. Position 215 is a phosphotyrosine; by TEC (Tyr215). The short motif at 221 to 223 is the Cell attachment site; atypical element; that stretch reads DGR. A Glycyl lysine isopeptide (Lys-Gly) (interchain with G-Cter in SUMO1) cross-link involves residue Lys228. Residues 261 to 277 are heparin-binding; sequence KRTGQYKLGSKTGPGQK.

It belongs to the heparin-binding growth factors family. Monomer. Homodimer. Interacts with FGFR1, FGFR2, FGFR3 and FGFR4. Affinity between fibroblast growth factors (FGFs) and their receptors is increased by heparan sulfate glycosaminoglycans that function as coreceptors. Interacts with CSPG4, FGFBP1 and TEC. Found in a complex with FGFBP1, FGF1 and FGF2. Interacts with FGFBP3. Interacts with integrin ITGAV:ITGB3; the interaction is required for FGF2 signaling. Interacts with SNORC (via the extracellular domain). Interacts with glypican GPC3. Post-translationally, phosphorylation at Tyr-215 regulates FGF2 unconventional secretion.

It localises to the secreted. The protein localises to the nucleus. Its function is as follows. Acts as a ligand for FGFR1, FGFR2, FGFR3 and FGFR4. Also acts as an integrin ligand which is required for FGF2 signaling. Binds to integrin ITGAV:ITGB3. Plays an important role in the regulation of cell survival, cell division, cell differentiation and cell migration. Functions as a potent mitogen in vitro. Can induce angiogenesis. Mediates phosphorylation of ERK1/2 and thereby promotes retinal lens fiber differentiation. In Pan troglodytes (Chimpanzee), this protein is Fibroblast growth factor 2.